A 93-amino-acid chain; its full sequence is Large ribosomal subunit protein uL23 (93 aa).

Belongs to the universal ribosomal protein uL23 family. Part of the 50S ribosomal subunit. Contacts protein L29, and trigger factor when it is bound to the ribosome.

One of the early assembly proteins it binds 23S rRNA. One of the proteins that surrounds the polypeptide exit tunnel on the outside of the ribosome. Forms the main docking site for trigger factor binding to the ribosome. This chain is Large ribosomal subunit protein uL23, found in Campylobacter jejuni subsp. jejuni serotype O:2 (strain ATCC 700819 / NCTC 11168).